A 379-amino-acid polypeptide reads, in one-letter code: MLSTLMKLLSACLWPSSSSGKSSDSTGKQDGLLWYKDFGQHLVGEFSMAVVQANNLLEDQSQVESGPLSTLDSGPYGTFIGIYDGHGGPETSRFVNDHLFQHLKRFAAEQASMSVDVIKKAYEATEEGFLGVVTKQWPTKPQIAAVGSCCLVGVICGGMLYIANVGDSRAVLGRAMKATGEVIALQLSAEHNVSIESVRQEMHSLHPDDSHIVMLKHNVWRVKGLIQISRSIGDVYLKKAEFNKEPLYTKYRIREPFKRPILSGEPTITEHEIQPQDKFLIFASDGLWEQMSNQEAVDIVQNHPRNGIARRLVKMALQEAAKKREMRYSDLKKIERGVRRHFHDDITVVIIFLDTNQVSSVKGPPLSIRGGGMTFPKKI.

An N-terminal signal peptide occupies residues 1-20 (MLSTLMKLLSACLWPSSSSG). Positions 42–353 (LVGEFSMAVV…DDITVVIIFL (312 aa)) constitute a PPM-type phosphatase domain. Position 73 is a phosphoserine (S73). Mn(2+) is bound by residues D84, G85, D285, and D344.

Belongs to the PP2C family. As to quaternary structure, interacts with SAUR19. It depends on Mg(2+) as a cofactor. Requires Mn(2+) as cofactor.

It carries out the reaction O-phospho-L-seryl-[protein] + H2O = L-seryl-[protein] + phosphate. The enzyme catalyses O-phospho-L-threonyl-[protein] + H2O = L-threonyl-[protein] + phosphate. Its function is as follows. May dephosphorylate and repress plasma membrane H(+)-ATPases (PM H(+)-ATPases, e.g. AHA1 and AHA2), thus influencing negatively plant growth and fitness. The protein is Probable protein phosphatase 2C 46 of Arabidopsis thaliana (Mouse-ear cress).